Consider the following 285-residue polypeptide: MASKDSDVRCVKCQSLKPTTPLTGQDRCARCVAINELKPWISTCNINPCYDGDLSESNETIEMMDINSCREDTPSDAESETRFMPFVAHSKQPKHTSKNPTKGEIQYFPVEKCKDIHRVENQSSIDEEGKQCWICRDGESLPEARYCNCYGDLQYCHEECLKTWISMSGEKKCKFCQTPYKVNRQLSLKRGLPGYWDRDDRFVFIAGFIGMGTILAGWIASFFYLLVVLCGKYFTYKDVMIVVGGLAIIQVVGLMFSLFMYFQIGNLLRQYINYMTETNIDPLRT.

Residues 1-201 lie on the Cytoplasmic side of the membrane; it reads MASKDSDVRC…LPGYWDRDDR (201 aa). The RING-CH-type zinc-finger motif lies at 124–183; the sequence is SIDEEGKQCWICRDGESLPEARYCNCYGDLQYCHEECLKTWISMSGEKKCKFCQTPYKVN. Residues Cys132, Cys135, Cys147, Cys149, His157, Cys160, Cys173, and Cys176 each coordinate Zn(2+). A helical membrane pass occupies residues 202–222; the sequence is FVFIAGFIGMGTILAGWIASF. Over 223–238 the chain is Extracellular; sequence FYLLVVLCGKYFTYKD. A helical membrane pass occupies residues 239-259; sequence VMIVVGGLAIIQVVGLMFSLF. Residues 260 to 285 are Cytoplasmic-facing; it reads MYFQIGNLLRQYINYMTETNIDPLRT.

It localises to the membrane. The enzyme catalyses S-ubiquitinyl-[E2 ubiquitin-conjugating enzyme]-L-cysteine + [acceptor protein]-L-lysine = [E2 ubiquitin-conjugating enzyme]-L-cysteine + N(6)-ubiquitinyl-[acceptor protein]-L-lysine.. It functions in the pathway protein modification; protein ubiquitination. Controls the expression of later classes of genes and also of the IE genes (Potential). E3 ubiquitin-protein ligase. E3 ubiquitin ligases accept ubiquitin from an E2 ubiquitin-conjugating enzyme in the form of a thioester and then directly transfer the ubiquitin to targeted substrates. The protein is Probable E3 ubiquitin-protein ligase IE1 (IE1) of Bovine herpesvirus 4 (strain DN-599) (BoHV-4).